The following is a 370-amino-acid chain: Polyadenylate-binding protein 4-like (370 aa).

RRM domains are found at residues 10 to 88, 98 to 174, 190 to 267, and 293 to 369; these read ASLY…WSQR, GNVF…RFKN, TNVY…RAQK, and VKLY…LAQR.

This sequence belongs to the polyadenylate-binding protein type-1 family.

Functionally, may bind RNA. This chain is Polyadenylate-binding protein 4-like (PABPC4L), found in Homo sapiens (Human).